The primary structure comprises 302 residues: tRNA pseudouridine synthase B (302 aa).

A substrate-binding site is contributed by H40. D45 functions as the Nucleophile in the catalytic mechanism. The substrate site is built by Y73, Y178, and L199.

This sequence belongs to the pseudouridine synthase TruB family. Type 1 subfamily.

The enzyme catalyses uridine(55) in tRNA = pseudouridine(55) in tRNA. Its function is as follows. Responsible for synthesis of pseudouridine from uracil-55 in the psi GC loop of transfer RNAs. This is tRNA pseudouridine synthase B from Buchnera aphidicola subsp. Baizongia pistaciae (strain Bp).